The sequence spans 2443 residues: NFX1-type zinc finger-containing protein 1 homolog (2443 aa).

Disordered stretches follow at residues 212–339, 545–566, and 583–672; these read PHKQ…EGDH, SSDSGRQVLSESRGAGSSNVYG, and HRDN…FVSP. A compositionally biased stretch (low complexity) spans 246–263; it reads ISISNSSPPGLSSVSPIP. A compositionally biased stretch (pro residues) spans 275–294; sequence PQPPGLSIPAPPGISLPTPP. A compositionally biased stretch (polar residues) spans 297–310; the sequence is SLQNHQNDQFEQAH. Residues 311-322 are compositionally biased toward low complexity; sequence STISRMSENSSS. Positions 545-564 are enriched in polar residues; the sequence is SSDSGRQVLSESRGAGSSNV. Composition is skewed to basic and acidic residues over residues 601–638 and 662–672; these read GEVHRRLDEQQQQRHEDESSRYRDDSRQSRRADDRRDQ and EHSRDDKFVSP. The region spanning 1040 to 1545 is the UvrD-like helicase ATP-binding domain; that stretch reads MDESQRLAFC…MNLTISDKIV (506 aa). 1061 to 1068 is an ATP binding site; sequence GPPGTGKT. 4 NF-X1-type zinc fingers span residues 1769-1791, 1853-1873, 1912-1930, and 2027-2044; these read CGHVCERLCHPNMEEEHLQRCLY, CGHACAAKCGEECTLVSECSQ, CPHKCAEICGQPCTVECME, and CGHTCSAKCGESCPPCKA.

This sequence belongs to the ZNFX1 family. As to quaternary structure, interacts with ego-1, csr-1, wago-1 and prg-1. Interacts with wago-4; the interaction promotes the transmission of epigenetic information across generations. Expressed in germs cells. Not expressed in somatic tissues.

Its subcellular location is the cytoplasm. It localises to the perinuclear region. It is found in the cytoplasmic granule. It catalyses the reaction ATP + H2O = ADP + phosphate + H(+). Functionally, epigenetic inheritance factor which, in association with the Argonaute protein wago-4, mediates small RNA-directed transgenerational epigenetic inheritance and thus balances the transgenerational inheritance of epigenetic information. Specifically, maintains a balanced production of small RNAs by preventing the spread of epigenetic signals towards the 5'-end of target mRNAs. Plays a role in small RNA-induced gene silencing in the germline. The protein is NFX1-type zinc finger-containing protein 1 homolog of Caenorhabditis elegans.